A 343-amino-acid polypeptide reads, in one-letter code: NAD-dependent deacetylase sir2E (343 aa).

The 274-residue stretch at 27–300 (YLKNKKEFEF…PLLERQLLYE (274 aa)) folds into the Deacetylase sirtuin-type domain. The Proton acceptor role is filled by H152. Zn(2+)-binding residues include C160, C165, C200, and C203.

This sequence belongs to the sirtuin family.

The protein resides in the nucleus. The catalysed reaction is N(6)-acetyl-L-lysyl-[protein] + NAD(+) + H2O = 2''-O-acetyl-ADP-D-ribose + nicotinamide + L-lysyl-[protein]. In terms of biological role, NAD-dependent deacetylase, which plays an important role in the regulation of transcriptional repression. May play a role in cell cycle. When overexpressed, the cell cycle is accelerated. The sequence is that of NAD-dependent deacetylase sir2E (sir2E) from Dictyostelium discoideum (Social amoeba).